Here is a 226-residue protein sequence, read N- to C-terminus: Putative 5'-nucleotidase alr3139 (226 aa).

A divalent metal cation contacts are provided by Asp-8, Asp-9, Ser-38, and Asn-89.

This sequence belongs to the SurE nucleotidase family. The cofactor is a divalent metal cation.

It localises to the cytoplasm. The enzyme catalyses a ribonucleoside 5'-phosphate + H2O = a ribonucleoside + phosphate. In terms of biological role, nucleotidase that shows phosphatase activity on nucleoside 5'-monophosphates. The protein is Putative 5'-nucleotidase alr3139 of Nostoc sp. (strain PCC 7120 / SAG 25.82 / UTEX 2576).